Consider the following 325-residue polypeptide: Glutarate 2-hydroxylase (325 aa).

3 residues coordinate Fe cation: His-160, Asp-162, and His-292.

Belongs to the glutarate hydroxylase family. As to quaternary structure, homotetramer. Requires Fe(2+) as cofactor.

It catalyses the reaction glutarate + 2-oxoglutarate + O2 = (S)-2-hydroxyglutarate + succinate + CO2. Its pathway is amino-acid degradation. Acts as an alpha-ketoglutarate-dependent dioxygenase catalyzing hydroxylation of glutarate (GA) to L-2-hydroxyglutarate (L2HG). Functions in a L-lysine degradation pathway that proceeds via cadaverine, glutarate and L-2-hydroxyglutarate. In Citrobacter koseri (strain ATCC BAA-895 / CDC 4225-83 / SGSC4696), this protein is Glutarate 2-hydroxylase.